The sequence spans 152 residues: SsrA-binding protein (152 aa).

It belongs to the SmpB family.

It localises to the cytoplasm. Required for rescue of stalled ribosomes mediated by trans-translation. Binds to transfer-messenger RNA (tmRNA), required for stable association of tmRNA with ribosomes. tmRNA and SmpB together mimic tRNA shape, replacing the anticodon stem-loop with SmpB. tmRNA is encoded by the ssrA gene; the 2 termini fold to resemble tRNA(Ala) and it encodes a 'tag peptide', a short internal open reading frame. During trans-translation Ala-aminoacylated tmRNA acts like a tRNA, entering the A-site of stalled ribosomes, displacing the stalled mRNA. The ribosome then switches to translate the ORF on the tmRNA; the nascent peptide is terminated with the 'tag peptide' encoded by the tmRNA and targeted for degradation. The ribosome is freed to recommence translation, which seems to be the essential function of trans-translation. This Persephonella marina (strain DSM 14350 / EX-H1) protein is SsrA-binding protein.